A 252-amino-acid polypeptide reads, in one-letter code: Large ribosomal subunit protein uL4 (252 aa).

Belongs to the universal ribosomal protein uL4 family. As to quaternary structure, part of the 50S ribosomal subunit.

Functionally, one of the primary rRNA binding proteins, this protein initially binds near the 5'-end of the 23S rRNA. It is important during the early stages of 50S assembly. It makes multiple contacts with different domains of the 23S rRNA in the assembled 50S subunit and ribosome. Its function is as follows. Forms part of the polypeptide exit tunnel. This chain is Large ribosomal subunit protein uL4, found in Methanococcus vannielii (strain ATCC 35089 / DSM 1224 / JCM 13029 / OCM 148 / SB).